The chain runs to 407 residues: 3-oxoacyl-[acyl-carrier-protein] synthase 1 (407 aa).

Positions 1–406 constitute a Ketosynthase family 3 (KS3) domain; the sequence is MKRVVITGFG…GTNVSLILKK (406 aa). Catalysis depends on for beta-ketoacyl synthase activity residues Cys164, His300, and His336.

This sequence belongs to the thiolase-like superfamily. Beta-ketoacyl-ACP synthases family. As to quaternary structure, homodimer.

The protein localises to the cytoplasm. It carries out the reaction a fatty acyl-[ACP] + malonyl-[ACP] + H(+) = a 3-oxoacyl-[ACP] + holo-[ACP] + CO2. It catalyses the reaction (3Z)-decenoyl-[ACP] + malonyl-[ACP] + H(+) = 3-oxo-(5Z)-dodecenoyl-[ACP] + holo-[ACP] + CO2. The protein operates within lipid metabolism; fatty acid biosynthesis. Functionally, involved in the type II fatty acid elongation cycle. Catalyzes the elongation of a wide range of acyl-ACP by the addition of two carbons from malonyl-ACP to an acyl acceptor. Can also use unsaturated fatty acids. Catalyzes a key reaction in unsaturated fatty acid (UFA) synthesis, the elongation of the cis-3-decenoyl-ACP produced by FabA. This Buchnera aphidicola subsp. Schizaphis graminum (strain Sg) protein is 3-oxoacyl-[acyl-carrier-protein] synthase 1 (fabB).